We begin with the raw amino-acid sequence, 305 residues long: tRNA uridine(34) hydroxylase (305 aa).

Positions 125 to 219 (ADENTVVVDT…YLEEVPREQS (95 aa)) constitute a Rhodanese domain. Cys-179 acts as the Cysteine persulfide intermediate in catalysis.

This sequence belongs to the TrhO family.

It catalyses the reaction uridine(34) in tRNA + AH2 + O2 = 5-hydroxyuridine(34) in tRNA + A + H2O. Catalyzes oxygen-dependent 5-hydroxyuridine (ho5U) modification at position 34 in tRNAs. This Brucella ovis (strain ATCC 25840 / 63/290 / NCTC 10512) protein is tRNA uridine(34) hydroxylase.